Consider the following 417-residue polypeptide: Serine hydroxymethyltransferase (417 aa).

Residues Leu121 and 125–127 (GHL) each bind (6S)-5,6,7,8-tetrahydrofolate. An N6-(pyridoxal phosphate)lysine modification is found at Lys229. 355–357 (SPF) is a (6S)-5,6,7,8-tetrahydrofolate binding site.

This sequence belongs to the SHMT family. In terms of assembly, homodimer. The cofactor is pyridoxal 5'-phosphate.

The protein resides in the cytoplasm. The catalysed reaction is (6R)-5,10-methylene-5,6,7,8-tetrahydrofolate + glycine + H2O = (6S)-5,6,7,8-tetrahydrofolate + L-serine. The protein operates within one-carbon metabolism; tetrahydrofolate interconversion. It participates in amino-acid biosynthesis; glycine biosynthesis; glycine from L-serine: step 1/1. Functionally, catalyzes the reversible interconversion of serine and glycine with tetrahydrofolate (THF) serving as the one-carbon carrier. This reaction serves as the major source of one-carbon groups required for the biosynthesis of purines, thymidylate, methionine, and other important biomolecules. Also exhibits THF-independent aldolase activity toward beta-hydroxyamino acids, producing glycine and aldehydes, via a retro-aldol mechanism. In Shewanella baltica (strain OS185), this protein is Serine hydroxymethyltransferase.